A 390-amino-acid chain; its full sequence is MCNNEAKMSELLSVQSDAPAKKINLMDLTRQQMREFFKELGEKPFRADQLVKWIYHFGEDNFDNMTNINKKLREKLKAVAEIKAPEVAVEQRSADGTIKWAMQVGEQQVETVYIPEADRATLCVSSQVGCALACTFCSTAQQGFNRNLTVSEIIGQVWRASKIIGNFGVTGVRPITNVVMMGMGEPLLNVANVVPAMEIMLDDFAYGLSKRRVTLSTSGVVPALDNLSKMIDVALAISLHAPNDELRDEIVPINKKYNIKTLIDSVNRYLNVSNANHGKVTIEYVMLDHVNDGVEHAHQLAEVLKNTPCKINLIPWNPFPEAPYAKSSNTRIDRFQKTLMEYDFTVIIRKTRGDDIDAACGQLAGDVIDRTKRTAMKRQFGQNIGVTEVN.

Catalysis depends on E110, which acts as the Proton acceptor. Residues 116-355 enclose the Radical SAM core domain; it reads EADRATLCVS…VIIRKTRGDD (240 aa). A disulfide bridge connects residues C123 and C360. [4Fe-4S] cluster-binding residues include C130, C134, and C137. S-adenosyl-L-methionine is bound by residues 184 to 185, S216, 238 to 240, and N317; these read GE and SLH. C360 (S-methylcysteine intermediate) is an active-site residue.

This sequence belongs to the radical SAM superfamily. RlmN family. [4Fe-4S] cluster serves as cofactor.

It is found in the cytoplasm. The catalysed reaction is adenosine(2503) in 23S rRNA + 2 reduced [2Fe-2S]-[ferredoxin] + 2 S-adenosyl-L-methionine = 2-methyladenosine(2503) in 23S rRNA + 5'-deoxyadenosine + L-methionine + 2 oxidized [2Fe-2S]-[ferredoxin] + S-adenosyl-L-homocysteine. It carries out the reaction adenosine(37) in tRNA + 2 reduced [2Fe-2S]-[ferredoxin] + 2 S-adenosyl-L-methionine = 2-methyladenosine(37) in tRNA + 5'-deoxyadenosine + L-methionine + 2 oxidized [2Fe-2S]-[ferredoxin] + S-adenosyl-L-homocysteine. Specifically methylates position 2 of adenine 2503 in 23S rRNA and position 2 of adenine 37 in tRNAs. m2A2503 modification seems to play a crucial role in the proofreading step occurring at the peptidyl transferase center and thus would serve to optimize ribosomal fidelity. In Haemophilus influenzae (strain ATCC 51907 / DSM 11121 / KW20 / Rd), this protein is Dual-specificity RNA methyltransferase RlmN.